We begin with the raw amino-acid sequence, 64 residues long: MAKAAKTIKLEQTGSAIRRHHSQRSTLIGLKLNKIGRTSELPDTPAVRGMIEKVHHLVRIVDEK.

This sequence belongs to the universal ribosomal protein uL30 family. As to quaternary structure, part of the 50S ribosomal subunit.

In Bradyrhizobium diazoefficiens (strain JCM 10833 / BCRC 13528 / IAM 13628 / NBRC 14792 / USDA 110), this protein is Large ribosomal subunit protein uL30.